The primary structure comprises 518 residues: Beta-TrCP (518 aa).

Over residues M1–T12 the composition is skewed to polar residues. The interval M1–P24 is disordered. Residues S14–P24 show a composition bias toward basic and acidic residues. The region spanning D119–L157 is the F-box domain. 7 WD repeats span residues E230–D258, G270–D298, H310–D338, G353–N381, G393–D421, G433–D461, and E482–D510.

Part of a SCF (SKP1-cullin-F-box) ubiquitin-protein ligase complex. Interacts with fbxo5.

Substrate recognition component of a SCF (SKP1-CUL1-F-box protein) E3 ubiquitin-protein ligase complex which mediates the ubiquitination and subsequent proteasomal degradation of target proteins. Probably recognizes and binds to phosphorylated target proteins. May participate in Wnt signaling. This chain is Beta-TrCP (fbxw1), found in Xenopus laevis (African clawed frog).